Consider the following 215-residue polypeptide: Endoplasmic reticulum vesicle protein 25 (215 aa).

The N-terminal stretch at methionine 1–glycine 21 is a signal peptide. Topologically, residues leucine 22–lysine 184 are lumenal. A GOLD domain is found at proline 34–serine 125. Residues tryptophan 185–leucine 205 traverse the membrane as a helical segment. The Cytoplasmic segment spans residues arginine 206 to isoleucine 215.

The protein belongs to the EMP24/GP25L family.

Its subcellular location is the endoplasmic reticulum membrane. It is found in the golgi apparatus membrane. Constituent of COPII-coated endoplasmic reticulum-derived transport vesicles. Required for efficient transport of a subset of secretory proteins to the Golgi. Facilitates retrograde transport from the Golgi to the endoplasmic reticulum. The chain is Endoplasmic reticulum vesicle protein 25 (ERV25) from Candida albicans (strain SC5314 / ATCC MYA-2876) (Yeast).